We begin with the raw amino-acid sequence, 61 residues long: Protein translocase subunit SecE (61 aa).

The Cytoplasmic segment spans residues 1–34 (MAELQERIRHFWKESRRAFLVTKKPNWATYKRAA). A helical transmembrane segment spans residues 35–55 (KITGLGIILIGLIGMLIRIVG). Residues 56-61 (ILILGG) are Extracellular-facing.

The protein belongs to the SecE/SEC61-gamma family. As to quaternary structure, component of the Sec protein translocase complex. Heterotrimer consisting of alpha (SecY), beta (SecG) and gamma (SecE) subunits. The heterotrimers can form oligomers, although 1 heterotrimer is thought to be able to translocate proteins. Interacts with the ribosome. May interact with SecDF, and other proteins may be involved.

The protein resides in the cell membrane. In terms of biological role, essential subunit of the protein translocation channel SecYEG. Clamps together the 2 halves of SecY. May contact the channel plug during translocation. The polypeptide is Protein translocase subunit SecE (Pyrococcus furiosus (strain ATCC 43587 / DSM 3638 / JCM 8422 / Vc1)).